The sequence spans 255 residues: Acetylglutamate kinase (255 aa).

Residues 40–41 (GG), arginine 62, and asparagine 153 each bind substrate.

Belongs to the acetylglutamate kinase family. ArgB subfamily.

The protein resides in the cytoplasm. The catalysed reaction is N-acetyl-L-glutamate + ATP = N-acetyl-L-glutamyl 5-phosphate + ADP. The protein operates within amino-acid biosynthesis; L-arginine biosynthesis; N(2)-acetyl-L-ornithine from L-glutamate: step 2/4. Catalyzes the ATP-dependent phosphorylation of N-acetyl-L-glutamate. This Bacillus thuringiensis subsp. konkukian (strain 97-27) protein is Acetylglutamate kinase.